The primary structure comprises 100 residues: Defensin-like protein 316 (100 aa).

An N-terminal signal peptide occupies residues 1–18; sequence MASHIICYIFCIIKLSCA. Disulfide bonds link Cys21–Cys84, Cys43–Cys64, and Cys53–Cys76.

This sequence belongs to the DEFL family.

It is found in the secreted. This chain is Defensin-like protein 316, found in Arabidopsis thaliana (Mouse-ear cress).